The chain runs to 540 residues: Exopolysaccharide phosphotransferase SCO6022 (540 aa).

It belongs to the stealth family.

The protein is Exopolysaccharide phosphotransferase SCO6022 of Streptomyces coelicolor (strain ATCC BAA-471 / A3(2) / M145).